The primary structure comprises 403 residues: Poly(rC)-binding protein 4 (403 aa).

3 KH domains span residues 17–67 (TLTL…TITG), 101–154 (PVTL…TVSG), and 241–293 (TSSQ…TITG).

The protein resides in the cytoplasm. Functionally, single-stranded nucleic acid binding protein that binds preferentially to oligo dC. The chain is Poly(rC)-binding protein 4 (PCBP4) from Bos taurus (Bovine).